A 237-amino-acid chain; its full sequence is 2-C-methyl-D-erythritol 4-phosphate cytidylyltransferase (237 aa).

Belongs to the IspD/TarI cytidylyltransferase family. IspD subfamily.

The catalysed reaction is 2-C-methyl-D-erythritol 4-phosphate + CTP + H(+) = 4-CDP-2-C-methyl-D-erythritol + diphosphate. The protein operates within isoprenoid biosynthesis; isopentenyl diphosphate biosynthesis via DXP pathway; isopentenyl diphosphate from 1-deoxy-D-xylulose 5-phosphate: step 2/6. Catalyzes the formation of 4-diphosphocytidyl-2-C-methyl-D-erythritol from CTP and 2-C-methyl-D-erythritol 4-phosphate (MEP). This chain is 2-C-methyl-D-erythritol 4-phosphate cytidylyltransferase, found in Vibrio vulnificus (strain YJ016).